The sequence spans 124 residues: Holo-[acyl-carrier-protein] synthase (124 aa).

Positions 7 and 55 each coordinate Mg(2+).

It belongs to the P-Pant transferase superfamily. AcpS family. Requires Mg(2+) as cofactor.

It localises to the cytoplasm. It carries out the reaction apo-[ACP] + CoA = holo-[ACP] + adenosine 3',5'-bisphosphate + H(+). Transfers the 4'-phosphopantetheine moiety from coenzyme A to a Ser of acyl-carrier-protein. In Borreliella afzelii (strain PKo) (Borrelia afzelii), this protein is Holo-[acyl-carrier-protein] synthase.